A 413-amino-acid polypeptide reads, in one-letter code: MSNVSGILETAGVPLVSANWPQPSPPPAVPAGPQMDHMGNSSQGAPWLFLTSALARGVSGIFVWTALVLTCHQIYLHLRSYTVPQEQRYIIRLLLIVPIYAFDSWLSLLLLGDHQYYVYFDSVRDCYEAFVIYSFLSLCFQYLGGEGAIMAEIRGKPIKSSCLYGTCCLRGMTYSIGFLRFCKQATLQFCLVKPVMAVTTIILQAFGKYHDGDFNVRSGYLYVTLIYNASVSLALYALFLFYFTTRELLRPFQPVLKFLTIKAVIFLSFWQGLLLAILERCGVIPEVETSGGNKLGAGTLAAGYQNFIICVEMLFASVALRYAFPCQVYAEKKENSPAPPAPMQSISSGIRETVSPQDIVQDAIHNFSPAYQHYTQQATHEAPRPGTHPSGGSGGSRKSRSLEKRMLIPSEDL.

Transmembrane regions (helical) follow at residues 47 to 69 (WLFL…ALVL), 93 to 113 (LLLI…LLGD), 130 to 150 (FVIY…GAIM), 187 to 207 (LQFC…QAFG), 223 to 243 (VTLI…LFYF), 258 to 278 (FLTI…LAIL), and 300 to 320 (LAAG…SVAL). A disordered region spans residues 372-413 (QHYTQQATHEAPRPGTHPSGGSGGSRKSRSLEKRMLIPSEDL).

It belongs to the TMEM184 family. Expressed in vascular cells (at protein level).

The protein localises to the cell membrane. Its subcellular location is the cytoplasm. The protein resides in the perinuclear region. It localises to the cytoplasmic vesicle membrane. It is found in the early endosome membrane. The protein localises to the endosome. Its subcellular location is the cytoplasmic vesicle. The protein resides in the secretory vesicle membrane. In terms of biological role, acts as a heparin receptor in vascular cells. May be involved in vesicle transport in exocrine cells and Sertoli cells. The polypeptide is Transmembrane protein 184A (TMEM184A) (Homo sapiens (Human)).